A 128-amino-acid chain; its full sequence is LIM domain-containing protein 2 (128 aa).

Position 1 is an N-acetylmethionine (Met1). The interval 1-25 (MFQAAGAAQATPSHEAKGSSGSSTV) is disordered. One can recognise an LIM zinc-binding domain in the interval 39 to 99 (ETCAACQKTV…RPHFQQLFKS (61 aa)). Zn(2+)-binding residues include Cys41, Cys44, His62, Cys65, Cys68, Cys71, Cys89, and His92.

In terms of assembly, interacts with ILK.

It localises to the cytoplasm. Its subcellular location is the nucleus. Its function is as follows. Acts as an activator of the protein-kinase ILK, thereby regulating cell motility. In Mus musculus (Mouse), this protein is LIM domain-containing protein 2.